Here is a 148-residue protein sequence, read N- to C-terminus: Homoprotocatechuate degradative operon repressor (148 aa).

The region spanning 2 to 134 (HDSLTIALLQ…LTHLLEEFIA (133 aa)) is the HTH marR-type domain.

Its function is as follows. Repressor for the homoprotocatechuate catabolic pathway hpc operon. The sequence is that of Homoprotocatechuate degradative operon repressor (hpcR) from Escherichia coli.